We begin with the raw amino-acid sequence, 236 residues long: Probable transcriptional regulatory protein UUR10_0292 (236 aa).

Belongs to the TACO1 family.

It localises to the cytoplasm. The chain is Probable transcriptional regulatory protein UUR10_0292 from Ureaplasma urealyticum serovar 10 (strain ATCC 33699 / Western).